The sequence spans 795 residues: MSKRHRLDLGEDYPSGKKRAGTDGKDRDRDRDREDRSKDRDRERDRGDREREREKEKEKELRASTNAMLISAGLPPLKASHSAHSTHSAHSTHSTHSAHSTHAGHAGHTSLPQCINPFTNLPHTPRYYDILKKRLQLPVWEYKDRFTDILVRHQSFVLVGETGSGKTTQIPQWCVEYMRSLPGPKRGVACTQPRRVAAMSVAQRVADEMDVMLGQEVGYSIRFEDCSSAKTILKYMTDGMLLREAMNDPLLERYGVIILDEAHERTLATDILMGVLKEVVRQRSDLKVIVMSATLDAGKFQIYFDNCPLLTIPGRTHPVEIFYTPEPERDYLEAAIRTVIQIHMCEEEEGDLLLFLTGQEEIDEACKRIKREVDDLGPEVGDIKIIPLYSTLPPQQQQRIFEPPPPKKQNGAIGRKVVVSTNIAETSLTIDGVVFVIDPGFAKQKVYNPRIRVESLLVTAISKASAQQRAGRAGRTRPGKCFRLYTEKAYKTEMQDNTYPEILRSNLGSVVLQLKKLGIDDLVHFDFMDPPAPETLMRALELLNYLAALNDDGDLTELGSMMAEFPLDPQLAKMVIASCDYNCSNEVLSITAMLSVPQCFVRPTEAKKAADEAKMRFAHIDGDHLTLLNVYHAFKQNHESVQWCYDNFINYRSLMSADNVRQQLSRIMDRFNLPRRSTDFTSRDYYINIRKALVTGYFMQVAHLERTGHYLTVKDNQVVQLHPSTVLDHKPEWVLYNEFVLTTKNYIRTCTDIKPEWLVKIAPQYYDMSNFPQCEAKRQLDRIIAKLQSKEYSQY.

A disordered region spans residues 1 to 108 (MSKRHRLDLG…HSTHAGHAGH (108 aa)). At Ser-15 the chain carries Phosphoserine. Residues 20–62 (AGTDGKDRDRDRDREDRSKDRDRERDRGDREREREKEKEKELR) show a composition bias toward basic and acidic residues. Low complexity predominate over residues 79–108 (ASHSAHSTHSAHSTHSTHSAHSTHAGHAGH). The Helicase ATP-binding domain maps to 147–313 (TDILVRHQSF…FDNCPLLTIP (167 aa)). 160-167 (GETGSGKT) serves as a coordination point for ATP. Residues 260–263 (DEAH) carry the DEAH box motif. The Helicase C-terminal domain maps to 338-518 (TVIQIHMCEE…SVVLQLKKLG (181 aa)). Lys-488 carries the post-translational modification N6-acetyllysine. Residue Lys-786 forms a Glycyl lysine isopeptide (Lys-Gly) (interchain with G-Cter in SUMO2) linkage.

It belongs to the DEAD box helicase family. DEAH subfamily. DDX15/PRP43 sub-subfamily. Component of the U11/U12 snRNPs that are part of the U12-type spliceosome. Identified in the Intron Large spliceosome complex (IL, also named intron lariat spliceosome), a post-mRNA release spliceosomal complex containing the excised intron, U2, U5 and U6 snRNPs, and splicing factors; the association may be transient. The IL complex exists in two distinct conformations, one with the DHX15 (ILS2) and one without (ILS1). Interacts with TFIP11 (via G-patch domain); indicative for a recruitment to the IL complex. Interacts with SSB/La. Interacts with GPATCH2 (via G-patch domain); promoting the RNA helicase activity. Interacts with NKRF (via G-patch domain); promoting the RNA helicase activity. Interacts with NLRP6. In terms of tissue distribution, ubiquitous.

It localises to the nucleus. It is found in the nucleolus. The enzyme catalyses ATP + H2O = ADP + phosphate + H(+). With respect to regulation, ATPase activity is enhanced upon binding to G-patch domain-containing proteins. G-patch domain-containing proteins act like a brace that tethers mobile sections of DHX15 together, stabilizing a functional conformation with high RNA affinity, thereby promoting the ATPase activity. Its function is as follows. RNA helicase involved in mRNA processing and antiviral innate immunity. Pre-mRNA processing factor involved in disassembly of spliceosomes after the release of mature mRNA. In cooperation with TFIP11 seem to be involved in the transition of the U2, U5 and U6 snRNP-containing IL complex to the snRNP-free IS complex leading to efficient debranching and turnover of excised introns. Plays a key role in antiviral innate immunity by promoting both MAVS-dependent signaling and NLRP6 inflammasome. Acts as an RNA virus sensor: recognizes and binds viral double stranded RNA (dsRNA) and activates the MAVS-dependent signaling to produce interferon-beta and interferon lambda-3 (IFNL3). Involved in intestinal antiviral innate immunity together with NLRP6: recognizes and binds viral dsRNA and promotes activation of the NLRP6 inflammasome in intestinal epithelial cells to restrict infection by enteric viruses. The NLRP6 inflammasome acts by promoting maturation and secretion of IL18 in the extracellular milieu. Also involved in antibacterial innate immunity by promoting Wnt-induced antimicrobial protein expression in Paneth cells. This is ATP-dependent RNA helicase DHX15 from Homo sapiens (Human).